Reading from the N-terminus, the 94-residue chain is Cell division topological specificity factor (94 aa).

It belongs to the MinE family.

Functionally, prevents the cell division inhibition by proteins MinC and MinD at internal division sites while permitting inhibition at polar sites. This ensures cell division at the proper site by restricting the formation of a division septum at the midpoint of the long axis of the cell. This is Cell division topological specificity factor from Hamiltonella defensa subsp. Acyrthosiphon pisum (strain 5AT).